We begin with the raw amino-acid sequence, 418 residues long: Putative ion-transport protein YfeO (418 aa).

12 consecutive transmembrane segments (helical) span residues 10–30 (LLLS…LIVV), 54–74 (DSPL…GLVI), 99–119 (ALPG…SLGP), 120–140 (EHPI…RLLP), 149–169 (ILAS…AALI), 186–206 (LFAP…FFHP), 223–243 (ILSG…AVWC), 258–278 (VLVL…GGPV), 300–320 (DYFL…ASGF), 322–342 (GGRI…LHEH), 343–363 (VPAV…VLVV), and 371–391 (LFMA…CIVM).

It belongs to the chloride channel (TC 2.A.49) family.

Its subcellular location is the cell membrane. The polypeptide is Putative ion-transport protein YfeO (Escherichia coli O9:H4 (strain HS)).